Reading from the N-terminus, the 72-residue chain is Large ribosomal subunit protein uL29 (72 aa).

The protein belongs to the universal ribosomal protein uL29 family.

The polypeptide is Large ribosomal subunit protein uL29 (rpmC) (Chlamydia muridarum (strain MoPn / Nigg)).